Reading from the N-terminus, the 333-residue chain is 1,5-anhydro-D-fructose reductase (333 aa).

Residues 9 to 12 (ASTI), 33 to 34 (ST), R38, 71 to 76 (TTNELH), 93 to 94 (EK), N120, 162 to 163 (WR), and Y283 each bind NADP(+).

As to quaternary structure, monomer.

The enzyme catalyses 1,5-anhydro-D-mannitol + NADP(+) = 1,5-anhydro-D-fructose + NADPH + H(+). In terms of biological role, catalyzes the NADPH-specific reduction of 1,5-anhydro-D-fructose to 1,5-anhydro-D-mannitol. Also shows some activity against structurally related compounds such as 3-keto-1,5-anhydro-D-fructose, D-glucosone and D-xylosone. The enzyme cannot use NADH as cosubstrate. In Ensifer adhaerens (Sinorhizobium morelense), this protein is 1,5-anhydro-D-fructose reductase (afr).